A 117-amino-acid chain; its full sequence is Large ribosomal subunit protein bL20 (117 aa).

Belongs to the bacterial ribosomal protein bL20 family.

Binds directly to 23S ribosomal RNA and is necessary for the in vitro assembly process of the 50S ribosomal subunit. It is not involved in the protein synthesizing functions of that subunit. The chain is Large ribosomal subunit protein bL20 from Mesomycoplasma hyopneumoniae (strain 232) (Mycoplasma hyopneumoniae).